A 188-amino-acid chain; its full sequence is dCTP deaminase (188 aa).

Residues 111–116 (KSTYAR), 135–137 (TLE), glutamine 156, tyrosine 170, and glutamine 180 contribute to the dCTP site. The active-site Proton donor/acceptor is glutamate 137.

Belongs to the dCTP deaminase family. In terms of assembly, homotrimer.

The catalysed reaction is dCTP + H2O + H(+) = dUTP + NH4(+). Its pathway is pyrimidine metabolism; dUMP biosynthesis; dUMP from dCTP (dUTP route): step 1/2. Its function is as follows. Catalyzes the deamination of dCTP to dUTP. This Nitrosomonas europaea (strain ATCC 19718 / CIP 103999 / KCTC 2705 / NBRC 14298) protein is dCTP deaminase.